The chain runs to 291 residues: Ribosomal RNA small subunit methyltransferase A (291 aa).

Asn-33, Val-35, Gly-60, Glu-81, Asp-111, and Asn-129 together coordinate S-adenosyl-L-methionine.

It belongs to the class I-like SAM-binding methyltransferase superfamily. rRNA adenine N(6)-methyltransferase family. RsmA subfamily.

It localises to the cytoplasm. It carries out the reaction adenosine(1518)/adenosine(1519) in 16S rRNA + 4 S-adenosyl-L-methionine = N(6)-dimethyladenosine(1518)/N(6)-dimethyladenosine(1519) in 16S rRNA + 4 S-adenosyl-L-homocysteine + 4 H(+). In terms of biological role, specifically dimethylates two adjacent adenosines (A1518 and A1519) in the loop of a conserved hairpin near the 3'-end of 16S rRNA in the 30S particle. May play a critical role in biogenesis of 30S subunits. The protein is Ribosomal RNA small subunit methyltransferase A of Streptomyces griseus subsp. griseus (strain JCM 4626 / CBS 651.72 / NBRC 13350 / KCC S-0626 / ISP 5235).